The following is a 435-amino-acid chain: Serine/threonine-protein kinase 40 (435 aa).

Residues 35–332 (FILGPRLGNS…DVLEALSAII (298 aa)) enclose the Protein kinase domain. ATP contacts are provided by residues 41-49 (LGNSPVPSI) and K66. D197 acts as the Proton acceptor in catalysis.

The protein belongs to the protein kinase superfamily. CAMK Ser/Thr protein kinase family.

It localises to the nucleus. The protein resides in the cytoplasm. It catalyses the reaction L-seryl-[protein] + ATP = O-phospho-L-seryl-[protein] + ADP + H(+). The enzyme catalyses L-threonyl-[protein] + ATP = O-phospho-L-threonyl-[protein] + ADP + H(+). Functionally, may be a negative regulator of NF-kappa-B and p53-mediated gene transcription. The polypeptide is Serine/threonine-protein kinase 40 (Stk40) (Rattus norvegicus (Rat)).